The sequence spans 284 residues: RNase adapter protein RapZ (284 aa).

Gly-8–Ser-15 lines the ATP pocket. Residue Asp-56 to Asn-59 coordinates GTP. The tract at residues Arg-266–Thr-284 is RNA-binding.

The protein belongs to the RapZ-like family. RapZ subfamily. Homotrimer.

Functionally, modulates the synthesis of GlmS, by affecting the processing and stability of the regulatory small RNA GlmZ. When glucosamine-6-phosphate (GlcN6P) concentrations are high in the cell, RapZ binds GlmZ and targets it to cleavage by RNase E. Consequently, GlmZ is inactivated and unable to activate GlmS synthesis. Under low GlcN6P concentrations, RapZ is sequestered and inactivated by an other regulatory small RNA, GlmY, preventing GlmZ degradation and leading to synthesis of GlmS. The chain is RNase adapter protein RapZ from Citrobacter koseri (strain ATCC BAA-895 / CDC 4225-83 / SGSC4696).